The following is a 234-amino-acid chain: Lipoprotein-releasing system ATP-binding protein LolD (234 aa).

The ABC transporter domain maps to 7–233 (LQCINLCKRY…LQHHLTLVGA (227 aa)). 43–50 (GSSGSGKS) provides a ligand contact to ATP.

It belongs to the ABC transporter superfamily. Lipoprotein translocase (TC 3.A.1.125) family. In terms of assembly, the complex is composed of two ATP-binding proteins (LolD) and two transmembrane proteins (LolC and LolE).

The protein localises to the cell inner membrane. Functionally, part of the ABC transporter complex LolCDE involved in the translocation of mature outer membrane-directed lipoproteins, from the inner membrane to the periplasmic chaperone, LolA. Responsible for the formation of the LolA-lipoprotein complex in an ATP-dependent manner. This chain is Lipoprotein-releasing system ATP-binding protein LolD, found in Yersinia pestis bv. Antiqua (strain Antiqua).